A 298-amino-acid polypeptide reads, in one-letter code: Lipoyl synthase (298 aa).

[4Fe-4S] cluster contacts are provided by Cys40, Cys45, Cys51, Cys67, Cys71, Cys74, and Ser280. The Radical SAM core domain occupies 53–269 (AVRKTATFMI…KEIALSKGFS (217 aa)).

The protein belongs to the radical SAM superfamily. Lipoyl synthase family. The cofactor is [4Fe-4S] cluster.

The protein localises to the cytoplasm. The enzyme catalyses [[Fe-S] cluster scaffold protein carrying a second [4Fe-4S](2+) cluster] + N(6)-octanoyl-L-lysyl-[protein] + 2 oxidized [2Fe-2S]-[ferredoxin] + 2 S-adenosyl-L-methionine + 4 H(+) = [[Fe-S] cluster scaffold protein] + N(6)-[(R)-dihydrolipoyl]-L-lysyl-[protein] + 4 Fe(3+) + 2 hydrogen sulfide + 2 5'-deoxyadenosine + 2 L-methionine + 2 reduced [2Fe-2S]-[ferredoxin]. It participates in protein modification; protein lipoylation via endogenous pathway; protein N(6)-(lipoyl)lysine from octanoyl-[acyl-carrier-protein]. Its function is as follows. Catalyzes the radical-mediated insertion of two sulfur atoms into the C-6 and C-8 positions of the octanoyl moiety bound to the lipoyl domains of lipoate-dependent enzymes, thereby converting the octanoylated domains into lipoylated derivatives. In Bacillus thuringiensis (strain Al Hakam), this protein is Lipoyl synthase.